The following is a 148-amino-acid chain: Glutamate mutase sigma subunit (148 aa).

The B12-binding domain maps to 3 to 140 (NPTIVIGVIG…KRDIERVMQS (138 aa)). Adenosylcob(III)alamin contacts are provided by residues 13 to 17 (ADCHA), His-16, 61 to 63 (SSI), and 93 to 97 (NLVIG).

The protein belongs to the methylaspartate mutase GlmS subunit family. As to quaternary structure, heterotetramer composed of 2 epsilon subunits (GlmE) and 2 sigma subunits (GlmS). GlmE exists as a homodimer and GlmS as a monomer. Adenosylcob(III)alamin serves as cofactor.

The catalysed reaction is (2S,3S)-3-methyl-L-aspartate = L-glutamate. It participates in amino-acid degradation; L-glutamate degradation via mesaconate pathway; acetate and pyruvate from L-glutamate: step 1/4. Functionally, catalyzes the carbon skeleton rearrangement of L-glutamate to L-threo-3-methylaspartate ((2S,3S)-3-methylaspartate). The polypeptide is Glutamate mutase sigma subunit (Yersinia enterocolitica serotype O:8 / biotype 1B (strain NCTC 13174 / 8081)).